We begin with the raw amino-acid sequence, 222 residues long: Zinc finger C2HC domain-containing protein 1B (222 aa).

The segment at 14-43 (ELFPCEVCGRRFAADVLERHGPICKKLFNR) adopts a C2HC/C3H-type 1 zinc-finger fold. The Zn(2+) site is built by C18, C21, H33, and C37. The tract at residues 48–78 (FSSLKQRLQGTDIPTVKKTPQSKSPPVRKSN) is disordered. The segment at 117 to 146 (DYIQRPYCMRRFNESAAERHTNFCKDQSSR) adopts a C2HC/C3H-type 2; degenerate zinc-finger fold. The disordered stretch occupies residues 196 to 222 (PTKSGLAMDPASGAKLRQGFSKSSKKD).

Belongs to the ZC2HC1 family. Zn(2+) is required as a cofactor.

This Homo sapiens (Human) protein is Zinc finger C2HC domain-containing protein 1B (ZC2HC1B).